Reading from the N-terminus, the 154-residue chain is Immunity protein YwqK (154 aa).

Probably interacts with cognate toxin YwqJ but not with other non-cognate LXG toxins. The interaction inhibits the toxic activity of YwqJ.

Its subcellular location is the cytoplasm. In terms of biological role, immunity component of one of 6 LXG toxin-immunity modules in this strain. They promote kin selection, mediate competition in biofilms, and drive spatial segregation of different strains, indicating that LXG toxins may help avoid warfare between strains in biofilms. Mediates intercellular competition during biofilm formation; disruption of the operon disadvantages the bacteria, but overexpression of the cognate immunity protein restores growth in competition with wild-type. In situ neutralizes the toxic effect of cognate toxin YqcG. Probably neutralizes the ability to inhibit growth of cognate toxin YwqJ. Probably does not have immunity protein activity on other LXG toxins. The protein is Immunity protein YwqK (ywqK) of Bacillus subtilis (strain 168).